We begin with the raw amino-acid sequence, 239 residues long: Increased recombination centers protein 22-2 (239 aa).

The signal sequence occupies residues 1-19 (MKLSTIFTAFAATIATVAG). At 20–161 (YETTGSKQTV…AAVSFFDPRL (142 aa)) the chain is on the lumenal side. Residues 162–182 (IFLELVLLITFAGLIYVGYEI) form a helical membrane-spanning segment. Residues 183 to 239 (WGKQYFKGVAPVKAKKVSAAKASSPVASGPSTTSATGYDTNWIPESHLKQKKTKKVN) lie on the Cytoplasmic side of the membrane. A compositionally biased stretch (low complexity) spans 201–213 (AAKASSPVASGPS). Residues 201–222 (AAKASSPVASGPSTTSATGYDT) form a disordered region.

It belongs to the IRC22 family.

It is found in the endoplasmic reticulum membrane. Is probably involved in a pathway contributing to genomic integrity. This chain is Increased recombination centers protein 22-2 (IRC22-2), found in Candida albicans (strain WO-1) (Yeast).